Here is a 501-residue protein sequence, read N- to C-terminus: Lysine--tRNA ligase (501 aa).

Residues Glu-402 and Glu-409 each contribute to the Mg(2+) site.

Belongs to the class-II aminoacyl-tRNA synthetase family. In terms of assembly, homodimer. The cofactor is Mg(2+).

The protein resides in the cytoplasm. The catalysed reaction is tRNA(Lys) + L-lysine + ATP = L-lysyl-tRNA(Lys) + AMP + diphosphate. In Helicobacter pylori (strain J99 / ATCC 700824) (Campylobacter pylori J99), this protein is Lysine--tRNA ligase (lysS).